Reading from the N-terminus, the 355-residue chain is Tabersonine 16-O-methyltransferase (355 aa).

S-adenosyl-L-methionine-binding positions include 198–201 (IGGG), Asp-222, 222–223 (DL), 242–243 (DM), and Lys-256. His-260 serves as the catalytic Proton acceptor.

It belongs to the class I-like SAM-binding methyltransferase superfamily. Cation-independent O-methyltransferase family. COMT subfamily. As to quaternary structure, homodimer. Expressed in leaves and flowers. Detected in stems and roots. In leaves, expressed in epidermal cells.

The protein localises to the cytoplasm. It catalyses the reaction 16-hydroxytabersonine + S-adenosyl-L-methionine = 16-methoxytabersonine + S-adenosyl-L-homocysteine + H(+). Its pathway is alkaloid biosynthesis; vindoline biosynthesis. Its function is as follows. 16-O-methyltransferase involved in the biosynthesis of vindoline. Highly specific for 16-hydroxytabersonine. No activity with tabersonine, 3-hydroxytyramine, 4-hydroxytyramine, 5-hydroxytryptamine (5HT), 2,3-dihydro-3-hydroxytabersonine, lochnericine, hoerhammericine, 16-hydroxy-2,3-dihydro-3-hydroxytabersonine, 16-hydroxylochnericine, 16-hydroxyhoerhammericine, quercetin, kaempferol and caffeic acid as substrates. This chain is Tabersonine 16-O-methyltransferase, found in Catharanthus roseus (Madagascar periwinkle).